We begin with the raw amino-acid sequence, 245 residues long: Uridylate kinase (245 aa).

An ATP-binding site is contributed by 14–17 (KLSG). Gly-56 is a UMP binding site. Gly-57 and Arg-61 together coordinate ATP. UMP is bound by residues Asp-76 and 137–144 (TGLPFFTT). Thr-164, Tyr-170, and Asp-173 together coordinate ATP.

This sequence belongs to the UMP kinase family. In terms of assembly, homohexamer.

It is found in the cytoplasm. It catalyses the reaction UMP + ATP = UDP + ADP. Its pathway is pyrimidine metabolism; CTP biosynthesis via de novo pathway; UDP from UMP (UMPK route): step 1/1. Its activity is regulated as follows. Inhibited by UTP. In terms of biological role, catalyzes the reversible phosphorylation of UMP to UDP. This chain is Uridylate kinase, found in Syntrophobacter fumaroxidans (strain DSM 10017 / MPOB).